Consider the following 541-residue polypeptide: Peptide chain release factor 3 (541 aa).

Residues 14 to 283 (EARRNFAIIS…AFLDYALKPG (270 aa)) form the tr-type G domain. GTP contacts are provided by residues 23–30 (SHPDAGKT), 91–95 (DTPGH), and 145–148 (NKLD).

Belongs to the TRAFAC class translation factor GTPase superfamily. Classic translation factor GTPase family. PrfC subfamily.

It localises to the cytoplasm. Functionally, increases the formation of ribosomal termination complexes and stimulates activities of RF-1 and RF-2. It binds guanine nucleotides and has strong preference for UGA stop codons. It may interact directly with the ribosome. The stimulation of RF-1 and RF-2 is significantly reduced by GTP and GDP, but not by GMP. This chain is Peptide chain release factor 3, found in Acaryochloris marina (strain MBIC 11017).